Reading from the N-terminus, the 260-residue chain is 5'-nucleotidase SurE (260 aa).

A divalent metal cation contacts are provided by Asp-19, Asp-20, Ser-51, and Asn-104.

The protein belongs to the SurE nucleotidase family. The cofactor is a divalent metal cation.

The protein resides in the cytoplasm. The enzyme catalyses a ribonucleoside 5'-phosphate + H2O = a ribonucleoside + phosphate. Functionally, nucleotidase that shows phosphatase activity on nucleoside 5'-monophosphates. In Paramagnetospirillum magneticum (strain ATCC 700264 / AMB-1) (Magnetospirillum magneticum), this protein is 5'-nucleotidase SurE.